A 141-amino-acid chain; its full sequence is ATP synthase epsilon chain (141 aa).

The protein belongs to the ATPase epsilon chain family. As to quaternary structure, F-type ATPases have 2 components, CF(1) - the catalytic core - and CF(0) - the membrane proton channel. CF(1) has five subunits: alpha(3), beta(3), gamma(1), delta(1), epsilon(1). CF(0) has three main subunits: a, b and c.

It is found in the cell inner membrane. Produces ATP from ADP in the presence of a proton gradient across the membrane. The polypeptide is ATP synthase epsilon chain (Azoarcus sp. (strain BH72)).